A 171-amino-acid chain; its full sequence is Small ribosomal subunit protein uS5 (171 aa).

The S5 DRBM domain maps to 16 to 79 (LVERLVTVDR…EAAKRNMITV (64 aa)).

It belongs to the universal ribosomal protein uS5 family. As to quaternary structure, part of the 30S ribosomal subunit. Contacts proteins S4 and S8.

Its function is as follows. With S4 and S12 plays an important role in translational accuracy. Located at the back of the 30S subunit body where it stabilizes the conformation of the head with respect to the body. The sequence is that of Small ribosomal subunit protein uS5 from Psychrobacter arcticus (strain DSM 17307 / VKM B-2377 / 273-4).